The primary structure comprises 91 residues: Probable Fe(2+)-trafficking protein (91 aa).

Belongs to the Fe(2+)-trafficking protein family.

Could be a mediator in iron transactions between iron acquisition and iron-requiring processes, such as synthesis and/or repair of Fe-S clusters in biosynthetic enzymes. The sequence is that of Probable Fe(2+)-trafficking protein from Ralstonia nicotianae (strain ATCC BAA-1114 / GMI1000) (Ralstonia solanacearum).